We begin with the raw amino-acid sequence, 214 residues long: Ribosomal RNA small subunit methyltransferase G (214 aa).

Residues glycine 78, leucine 83, 129 to 130 (AE), and arginine 144 each bind S-adenosyl-L-methionine.

Belongs to the methyltransferase superfamily. RNA methyltransferase RsmG family.

Its subcellular location is the cytoplasm. The catalysed reaction is guanosine(527) in 16S rRNA + S-adenosyl-L-methionine = N(7)-methylguanosine(527) in 16S rRNA + S-adenosyl-L-homocysteine. Functionally, specifically methylates the N7 position of guanine in position 527 of 16S rRNA. This Marinobacter nauticus (strain ATCC 700491 / DSM 11845 / VT8) (Marinobacter aquaeolei) protein is Ribosomal RNA small subunit methyltransferase G.